Consider the following 218-residue polypeptide: 7-cyano-7-deazaguanine synthase (218 aa).

9–19 (YSGGMDSFTVL) provides a ligand contact to ATP. 4 residues coordinate Zn(2+): Cys185, Cys193, Cys196, and Cys199.

The protein belongs to the QueC family. It depends on Zn(2+) as a cofactor.

It carries out the reaction 7-carboxy-7-deazaguanine + NH4(+) + ATP = 7-cyano-7-deazaguanine + ADP + phosphate + H2O + H(+). It functions in the pathway purine metabolism; 7-cyano-7-deazaguanine biosynthesis. In terms of biological role, catalyzes the ATP-dependent conversion of 7-carboxy-7-deazaguanine (CDG) to 7-cyano-7-deazaguanine (preQ(0)). The protein is 7-cyano-7-deazaguanine synthase of Pseudoalteromonas translucida (strain TAC 125).